A 133-amino-acid chain; its full sequence is uncharacterized protein (133 aa).

To E.coli ydcQ.

This is an uncharacterized protein from Haemophilus phage HP1 (strain HP1c1) (Bacteriophage HP1).